The primary structure comprises 229 residues: Peptidase E (229 aa).

Active-site charge relay system residues include serine 120, aspartate 135, and histidine 157.

This sequence belongs to the peptidase S51 family.

It is found in the cytoplasm. It carries out the reaction Dipeptidase E catalyzes the hydrolysis of dipeptides Asp-|-Xaa. It does not act on peptides with N-terminal Glu, Asn or Gln, nor does it cleave isoaspartyl peptides.. Its function is as follows. Hydrolyzes dipeptides containing N-terminal aspartate residues. May play a role in allowing the cell to use peptide aspartate to spare carbon otherwise required for the synthesis of the aspartate family of amino acids. In Shigella flexneri serotype 5b (strain 8401), this protein is Peptidase E.